Consider the following 142-residue polypeptide: Large ribosomal subunit protein uL13 (142 aa).

Belongs to the universal ribosomal protein uL13 family. In terms of assembly, part of the 50S ribosomal subunit.

This protein is one of the early assembly proteins of the 50S ribosomal subunit, although it is not seen to bind rRNA by itself. It is important during the early stages of 50S assembly. This is Large ribosomal subunit protein uL13 from Maridesulfovibrio salexigens (strain ATCC 14822 / DSM 2638 / NCIMB 8403 / VKM B-1763) (Desulfovibrio salexigens).